The primary structure comprises 330 residues: MKPCMTALRQVIQPLSLNFQGNMVDVPFFRRKDKVVFVMGATGTGKSRLAIDLATRFPAEIVNSDKIQVYKGLDIVTNKVTPEESLGVPHHLLGTVHDTYEDFTAEDFQREAIRAVESIVQRDRVPIIAGGSNSYIEALVNDCVDFRLRYNCCFLWVDVSRPVLHSFVSERVDKMVDMGLVDEVRRIFDPSSSDYSAGIRRAIGVPELDEFLRSEMRNYPAETTERLLETAIEKIKENTCLLACRQLQKIQRLYKQWKWNMHRVDATEVFLRRGEEADEAWDNSVAHPSALAVEKFLSYSDDHHLEGANILLPEISAVPPLPAAVAAISR.

A chloroplast-targeting transit peptide spans 1 to 39 (MKPCMTALRQVIQPLSLNFQGNMVDVPFFRRKDKVVFVM). Position 40-47 (40-47 (GATGTGKS)) interacts with ATP.

Belongs to the IPP transferase family. In terms of tissue distribution, expressed in root primordia, columella root caps, upper part of young inflorescences, and fruit abscission zones.

It localises to the plastid. Its subcellular location is the chloroplast. The catalysed reaction is dimethylallyl diphosphate + ADP = N(6)-(dimethylallyl)adenosine 5'-diphosphate + diphosphate. It catalyses the reaction dimethylallyl diphosphate + ATP = N(6)-(dimethylallyl)adenosine 5'-triphosphate + diphosphate. Functionally, involved in cytokinin biosynthesis. Catalyzes the transfer of an isopentenyl group from dimethylallyl diphosphate (DMAPP) to ATP and ADP. The sequence is that of Adenylate isopentenyltransferase 5, chloroplastic (IPT5) from Arabidopsis thaliana (Mouse-ear cress).